We begin with the raw amino-acid sequence, 497 residues long: Probable malate:quinone oxidoreductase (497 aa).

The protein belongs to the MQO family. FAD serves as cofactor.

It catalyses the reaction (S)-malate + a quinone = a quinol + oxaloacetate. It participates in carbohydrate metabolism; tricarboxylic acid cycle; oxaloacetate from (S)-malate (quinone route): step 1/1. The protein is Probable malate:quinone oxidoreductase of Flavobacterium johnsoniae (strain ATCC 17061 / DSM 2064 / JCM 8514 / BCRC 14874 / CCUG 350202 / NBRC 14942 / NCIMB 11054 / UW101) (Cytophaga johnsonae).